Here is a 710-residue protein sequence, read N- to C-terminus: Chaperonin-containing T-complex member BBS12 (710 aa).

It belongs to the TCP-1 chaperonin family. BBS12 subfamily. In terms of assembly, component of the chaperonin-containing T-complex (TRiC), a heterooligomeric complex of about 850 to 900 kDa that forms two stacked rings, 12 to 16 nm in diameter. Interacts with MKKS.

It is found in the cell projection. The protein localises to the cilium. Functionally, component of the chaperonin-containing T-complex (TRiC), a molecular chaperone complex that assists the folding of proteins upon ATP hydrolysis. As part of the TRiC complex may play a role in the assembly of BBSome, a complex involved in ciliogenesis regulating transports vesicles to the cilia. Involved in adipogenic differentiation. This Homo sapiens (Human) protein is Chaperonin-containing T-complex member BBS12 (BBS12).